The sequence spans 433 residues: Adenylosuccinate synthetase (433 aa).

Residues 13–19 and 41–43 contribute to the GTP site; these read GDEGKGK and GHT. Residue Asp14 is the Proton acceptor of the active site. Positions 14 and 41 each coordinate Mg(2+). Residues 14–17, 39–42, Thr130, Arg144, Gln225, Thr240, and Arg304 contribute to the IMP site; these read DEGK and NAGH. Catalysis depends on His42, which acts as the Proton donor. 300–306 lines the substrate pocket; the sequence is STTGRKR. GTP is bound by residues Arg306, 332–334, and 414–416; these read KLD and STG.

This sequence belongs to the adenylosuccinate synthetase family. Homodimer. Mg(2+) is required as a cofactor.

The protein localises to the cytoplasm. It carries out the reaction IMP + L-aspartate + GTP = N(6)-(1,2-dicarboxyethyl)-AMP + GDP + phosphate + 2 H(+). It participates in purine metabolism; AMP biosynthesis via de novo pathway; AMP from IMP: step 1/2. Functionally, plays an important role in the de novo pathway of purine nucleotide biosynthesis. Catalyzes the first committed step in the biosynthesis of AMP from IMP. In Buchnera aphidicola subsp. Acyrthosiphon pisum (strain Tuc7), this protein is Adenylosuccinate synthetase.